The primary structure comprises 104 residues: Glutaredoxin (104 aa).

The Glutaredoxin domain maps to 3-103 (MIKAQELVSS…PLLTEAGAVK (101 aa)). Cys-23 and Cys-26 are disulfide-bonded.

It belongs to the glutaredoxin family. CPYC subfamily.

The protein resides in the cytoplasm. Its function is as follows. Has a glutathione-disulfide oxidoreductase activity in the presence of NADPH and glutathione reductase. Reduces low molecular weight disulfides and proteins. The chain is Glutaredoxin from Vernicia fordii (Tung).